Reading from the N-terminus, the 931-residue chain is MSQSPAFGPRRGSSPRGAAGAAARRNESQDYLLMDSELGEDGCPQAPLPCYGYYPCFRGSDNRLAHRRQTVLREKGRRLANRGPAYMFSDRSTSLSIEEERFLDAAEYGNIPVVRKMLEECHSLNVNCVDYMGQNALQLAVANEHLEITELLLKKENLSRVGDALLLAISKGYVRIVEAILSHPAFAEGKRLATSPSQSELQQDDFYAYDEDGTRFSHDVTPIILAAHCQEYEIVHTLLRKGARIERPHDYFCKCNDCNQKQKHDSFSHSRSRINAYKGLASPAYLSLSSEDPVMTALELSNELAVLANIEKEFKNDYKKLSMQCKDFVVGLLDLCRNTEEVEAILNGDVETLQSGDHGRPNLSRLKLAIKYEVKKFVAHPNCQQQLLSIWYENLSGLRQQTMAVKFLVVLAVAIGLPFLALIYWFAPCSKMGKIMRGPFMKFVAHAASFTIFLGLLVMNAADRFEGTKLLPNETSTDNAKQLFRMKTSCFSWMEMLIISWVIGMIWAECKEIWTQGPKEYLFELWNMLDFGMLAIFAASFIARFMAFWHASKAQSIIDANDTLKDLTKVTLGDNVKYYNLARIKWDPSDPQIISEGLYAIAVVLSFSRIAYILPANESFGPLQISLGRTVKDIFKFMVIFIMVFVAFMIGMFNLYSYYIGAKQNEAFTTVEESFKTLFWAIFGLSEVKSVVINYNHKFIENIGYVLYGVYNVTMVIVLLNMLIAMINSSFQEIEDDADVEWKFARAKLWFSYFEEGRTLPVPFNLVPSPKSLFYLLLKLKKWISELFQGHKKGFQEDAEMNKINEEKKLGILGSHEDLSKLSLDKKQVGHNKQPSIRSSEDFHLNSFNNPPRQYQKIMKRLIKRYVLQAQIDKESDEVNEGELKEIKQDISSLRYELLEEKSQNTEDLAELIRELGEKLSMEPNQEETNR.

Over residues 1 to 23 (MSQSPAFGPRRGSSPRGAAGAAA) the composition is skewed to low complexity. Positions 1 to 26 (MSQSPAFGPRRGSSPRGAAGAAARRN) are disordered. The Cytoplasmic segment spans residues 1–438 (MSQSPAFGPR…CSKMGKIMRG (438 aa)). 4 ANK repeats span residues 97 to 126 (IEEE…SLNV), 132 to 161 (MGQN…LSRV), 163 to 189 (DALL…FAEG), and 218 to 247 (HDVT…RIER). A helical transmembrane segment spans residues 439-459 (PFMKFVAHAASFTIFLGLLVM). Residues 460-487 (NAADRFEGTKLLPNETSTDNAKQLFRMK) lie on the Extracellular side of the membrane. An N-linked (GlcNAc...) asparagine glycan is attached at Asn-473. A helical transmembrane segment spans residues 488–508 (TSCFSWMEMLIISWVIGMIWA). Topologically, residues 509-521 (ECKEIWTQGPKEY) are cytoplasmic. A helical transmembrane segment spans residues 522–542 (LFELWNMLDFGMLAIFAASFI). Topologically, residues 543–592 (ARFMAFWHASKAQSIIDANDTLKDLTKVTLGDNVKYYNLARIKWDPSDPQ) are extracellular. An N-linked (GlcNAc...) asparagine glycan is attached at Asn-561. Residues 593 to 613 (IISEGLYAIAVVLSFSRIAYI) form a helical membrane-spanning segment. Residues 614–636 (LPANESFGPLQISLGRTVKDIFK) lie on the Cytoplasmic side of the membrane. A helical membrane pass occupies residues 637–657 (FMVIFIMVFVAFMIGMFNLYS). The Extracellular segment spans residues 658–706 (YYIGAKQNEAFTTVEESFKTLFWAIFGLSEVKSVVINYNHKFIENIGYV). A helical transmembrane segment spans residues 707–727 (LYGVYNVTMVIVLLNMLIAMI). Over 728–931 (NSSFQEIEDD…MEPNQEETNR (204 aa)) the chain is Cytoplasmic. Ser-815 bears the Phosphoserine mark.

Belongs to the transient receptor (TC 1.A.4) family. STrpC subfamily. TRPC6 sub-subfamily. Homodimer; forms channel complex. Interacts with MX1 and RNF24. Post-translationally, phosphorylated by FYN, leading to an increase of TRPC6 channel activity. As to expression, expressed primarily in placenta, lung, spleen, ovary and small intestine. Expressed in podocytes and is a component of the glomerular slit diaphragm.

It localises to the cell membrane. It carries out the reaction Ca(2+)(in) = Ca(2+)(out). Activated by diacylglycerol (DAG) in a membrane-delimited fashion, independently of protein kinase C. Functionally, forms a receptor-activated non-selective calcium permeant cation channel. Probably is operated by a phosphatidylinositol second messenger system activated by receptor tyrosine kinases or G-protein coupled receptors. Activated by diacylglycerol (DAG) in a membrane-delimited fashion, independently of protein kinase C. Seems not to be activated by intracellular calcium store depletion. This Homo sapiens (Human) protein is Short transient receptor potential channel 6.